Here is a 290-residue protein sequence, read N- to C-terminus: Phosphate import ATP-binding protein PstB (290 aa).

The ABC transporter domain occupies 25-285 (LEARNLDFYY…PKTRRARDYL (261 aa)). Residue 57–64 (GPSGCGKS) participates in ATP binding.

It belongs to the ABC transporter superfamily. Phosphate importer (TC 3.A.1.7) family. The complex is composed of two ATP-binding proteins (PstB), two transmembrane proteins (PstC and PstA) and a solute-binding protein (PstS).

Its subcellular location is the cell inner membrane. The catalysed reaction is phosphate(out) + ATP + H2O = ADP + 2 phosphate(in) + H(+). Part of the ABC transporter complex PstSACB involved in phosphate import. Responsible for energy coupling to the transport system. The polypeptide is Phosphate import ATP-binding protein PstB (Zymomonas mobilis subsp. mobilis (strain ATCC 31821 / ZM4 / CP4)).